The primary structure comprises 716 residues: Fatty acid oxidation complex subunit alpha (716 aa).

An enoyl-CoA hydratase/isomerase region spans residues 1-188 (MIYQSPTIQV…KVGAIDAVVA (188 aa)). Position 295 (Asp295) interacts with substrate. The 3-hydroxyacyl-CoA dehydrogenase stretch occupies residues 310–716 (KDIKHAAVLG…SNNGSYYPKA (407 aa)). NAD(+) contacts are provided by residues Met323, Asp342, 399-401 (VVE), Lys406, and Ser428. His449 acts as the For 3-hydroxyacyl-CoA dehydrogenase activity in catalysis. Asn452 provides a ligand contact to NAD(+). Residues Asn499 and Tyr659 each coordinate substrate.

This sequence in the N-terminal section; belongs to the enoyl-CoA hydratase/isomerase family. It in the C-terminal section; belongs to the 3-hydroxyacyl-CoA dehydrogenase family. In terms of assembly, heterotetramer of two alpha chains (FadB) and two beta chains (FadA).

The enzyme catalyses a (3S)-3-hydroxyacyl-CoA + NAD(+) = a 3-oxoacyl-CoA + NADH + H(+). It carries out the reaction a (3S)-3-hydroxyacyl-CoA = a (2E)-enoyl-CoA + H2O. The catalysed reaction is a 4-saturated-(3S)-3-hydroxyacyl-CoA = a (3E)-enoyl-CoA + H2O. It catalyses the reaction (3S)-3-hydroxybutanoyl-CoA = (3R)-3-hydroxybutanoyl-CoA. The enzyme catalyses a (3Z)-enoyl-CoA = a 4-saturated (2E)-enoyl-CoA. It carries out the reaction a (3E)-enoyl-CoA = a 4-saturated (2E)-enoyl-CoA. The protein operates within lipid metabolism; fatty acid beta-oxidation. Involved in the aerobic and anaerobic degradation of long-chain fatty acids via beta-oxidation cycle. Catalyzes the formation of 3-oxoacyl-CoA from enoyl-CoA via L-3-hydroxyacyl-CoA. It can also use D-3-hydroxyacyl-CoA and cis-3-enoyl-CoA as substrate. This Shewanella amazonensis (strain ATCC BAA-1098 / SB2B) protein is Fatty acid oxidation complex subunit alpha.